The chain runs to 481 residues: uncharacterized protein (481 aa).

The protein belongs to the metallophosphoesterase superfamily.

This is an uncharacterized protein from Bacillus subtilis (strain 168).